The sequence spans 106 residues: Urease subunit beta (106 aa).

It belongs to the urease beta subunit family. In terms of assembly, heterotrimer of UreA (gamma), UreB (beta) and UreC (alpha) subunits. Three heterotrimers associate to form the active enzyme.

Its subcellular location is the cytoplasm. The catalysed reaction is urea + 2 H2O + H(+) = hydrogencarbonate + 2 NH4(+). Its pathway is nitrogen metabolism; urea degradation; CO(2) and NH(3) from urea (urease route): step 1/1. This Citrobacter koseri (strain ATCC BAA-895 / CDC 4225-83 / SGSC4696) protein is Urease subunit beta.